We begin with the raw amino-acid sequence, 291 residues long: Acetyl-coenzyme A carboxylase carboxyl transferase subunit beta (291 aa).

Positions Met34–Glu291 constitute a CoA carboxyltransferase N-terminal domain. Zn(2+) contacts are provided by Cys38, Cys41, Cys57, and Cys60. The C4-type zinc-finger motif lies at Cys38–Cys60.

This sequence belongs to the AccD/PCCB family. As to quaternary structure, acetyl-CoA carboxylase is a heterohexamer composed of biotin carboxyl carrier protein (AccB), biotin carboxylase (AccC) and two subunits each of ACCase subunit alpha (AccA) and ACCase subunit beta (AccD). Zn(2+) is required as a cofactor.

It is found in the cytoplasm. The catalysed reaction is N(6)-carboxybiotinyl-L-lysyl-[protein] + acetyl-CoA = N(6)-biotinyl-L-lysyl-[protein] + malonyl-CoA. The protein operates within lipid metabolism; malonyl-CoA biosynthesis; malonyl-CoA from acetyl-CoA: step 1/1. Component of the acetyl coenzyme A carboxylase (ACC) complex. Biotin carboxylase (BC) catalyzes the carboxylation of biotin on its carrier protein (BCCP) and then the CO(2) group is transferred by the transcarboxylase to acetyl-CoA to form malonyl-CoA. This Clostridium botulinum (strain Alaska E43 / Type E3) protein is Acetyl-coenzyme A carboxylase carboxyl transferase subunit beta.